The sequence spans 433 residues: Adenylosuccinate synthetase (433 aa).

GTP is bound by residues 13–19 and 41–43; these read GDEGKGK and GHT. Residue Asp-14 is the Proton acceptor of the active site. Residues Asp-14 and Gly-41 each coordinate Mg(2+). Residues 14–17, 39–42, Thr-130, Arg-144, Gln-225, Thr-240, and Arg-304 each bind IMP; these read DEGK and NAGH. His-42 functions as the Proton donor in the catalytic mechanism. 300 to 306 contributes to the substrate binding site; sequence STTGRKR. GTP is bound by residues Arg-306, 332–334, and 414–416; these read KLD and STG.

This sequence belongs to the adenylosuccinate synthetase family. Homodimer. Mg(2+) is required as a cofactor.

Its subcellular location is the cytoplasm. It catalyses the reaction IMP + L-aspartate + GTP = N(6)-(1,2-dicarboxyethyl)-AMP + GDP + phosphate + 2 H(+). Its pathway is purine metabolism; AMP biosynthesis via de novo pathway; AMP from IMP: step 1/2. Plays an important role in the de novo pathway of purine nucleotide biosynthesis. Catalyzes the first committed step in the biosynthesis of AMP from IMP. This is Adenylosuccinate synthetase from Buchnera aphidicola subsp. Acyrthosiphon pisum (strain Tuc7).